The primary structure comprises 61 residues: UPF0434 protein PA14_25520 (61 aa).

It belongs to the UPF0434 family.

This is UPF0434 protein PA14_25520 from Pseudomonas aeruginosa (strain UCBPP-PA14).